Consider the following 215-residue polypeptide: Thiamine import ATP-binding protein ThiQ (215 aa).

Residues 2-215 (IYLNNVILND…GQISQLQKGV (214 aa)) form the ABC transporter domain. 32–39 (GESGAGKS) contributes to the ATP binding site.

It belongs to the ABC transporter superfamily. Thiamine importer (TC 3.A.1.19.1) family. In terms of assembly, the complex is composed of two ATP-binding proteins (ThiQ), two transmembrane proteins (ThiP) and a solute-binding protein (ThiB).

It localises to the cell inner membrane. It carries out the reaction thiamine(out) + ATP + H2O = thiamine(in) + ADP + phosphate + H(+). Its function is as follows. Part of the ABC transporter complex ThiBPQ involved in thiamine import. Responsible for energy coupling to the transport system. This chain is Thiamine import ATP-binding protein ThiQ, found in Haemophilus influenzae (strain 86-028NP).